The following is a 1410-amino-acid chain: SNF2 domain-containing protein CLASSY 3 (1410 aa).

Residues 1–12 (MECIGKRVKSRS) show a composition bias toward basic residues. Disordered regions lie at residues 1–74 (MECI…SVPN), 87–108 (DLNV…SEQN), 209–330 (GEIE…PIKR), 344–376 (RSGS…QREV), 428–593 (NVSK…LKDK), and 632–654 (EDEA…REDH). The short motif at 22-29 (RKKMETVA) is the Nuclear localization signal 1 element. Polar residues predominate over residues 95 to 108 (GPSSSRLTDGSEQN). The segment covering 245-266 (SDGEDSSSETDEEEEENQDSED) has biased composition (acidic residues). Residues 248–278 (EDSSSETDEEEEENQDSEDNNTKDNVTVESL) are a coiled coil. Positions 276-301 (ESLSSEDPSSSSSSSSSSSSSSSSSS) are enriched in low complexity. Residues 306–323 (SYVKEVVGDNRDDDDLRK) are compositionally biased toward basic and acidic residues. The short motif at 328–335 (IKRVSLVE) is the Nuclear localization signal 2 element. Positions 351–376 (KPRERDNKIQKLNHREEEKKERQREV) are enriched in basic and acidic residues. Residues 356–377 (DNKIQKLNHREEEKKERQREVV) are a coiled coil. Residues 428-446 (NVSKYEDSVSINSGKTTGA) show a composition bias toward polar residues. Composition is skewed to basic and acidic residues over residues 450 to 463 (PEVE…ELNT) and 488 to 504 (EPSR…KEVQ). Positions 576–587 (SSISSGDGYESD) are enriched in low complexity. In terms of domain architecture, Helicase ATP-binding spans 850–1060 (FENSDETGGC…CNVLGLARPK (211 aa)). 863 to 870 (HAPGTGKT) serves as a coordination point for ATP. The DEAH box signature appears at 1011-1014 (DEAH). Positions 1132 to 1139 (QRRVLESI) match the Nuclear localization signal 3 motif. The Helicase C-terminal domain maps to 1206-1359 (EFVELCEVIK…ELVFACSSRH (154 aa)).

It belongs to the SNF2/RAD54 helicase family. As to quaternary structure, interacts with NRPD1.

The protein localises to the nucleus. Probable chromatin remodeling factor. The chain is SNF2 domain-containing protein CLASSY 3 (CLSY3) from Arabidopsis thaliana (Mouse-ear cress).